The primary structure comprises 723 residues: Polyribonucleotide nucleotidyltransferase (723 aa).

The Mg(2+) site is built by D497 and D503. The KH domain maps to 564 to 623 (PRLLSFRIDPELIGTVIGPGGRTIKGITERTNTKIDIEDGGIVTIASHDGAAAEAAQRII). In terms of domain architecture, S1 motif spans 633–701 (GEVFTGTITR…NRGRINLTLR (69 aa)). The tract at residues 701–723 (RGVPQNGEETQSEPAPTPVAPLN) is disordered.

Belongs to the polyribonucleotide nucleotidyltransferase family. The cofactor is Mg(2+).

The protein resides in the cytoplasm. It catalyses the reaction RNA(n+1) + phosphate = RNA(n) + a ribonucleoside 5'-diphosphate. Its function is as follows. Involved in mRNA degradation. Catalyzes the phosphorolysis of single-stranded polyribonucleotides processively in the 3'- to 5'-direction. This is Polyribonucleotide nucleotidyltransferase from Prochlorococcus marinus (strain MIT 9313).